The chain runs to 315 residues: Calumenin-A (315 aa).

The N-terminal stretch at 1–19 is a signal peptide; it reads MEIRPLLMCFALCVVYATS. 6 consecutive EF-hand domains span residues 68–103, 104–139, 151–186, 188–223, 229–264, and 265–300; these read ESKRRLGVIVEKIDGDSDGFVTEVELRAWIKKAQKK, YIYENVDRQWKDFDVNNDGMISWEEYRNVTYGTYLD, HMMARDERRFKMADQNRDQIANKEEFTAFLHPEEYD, MKDIVVLETMEDIDKNGDGFIDLNEYIGDMYNHEDE, WVATEREQFSEFRDKNKDGKMDREETMDWILPSDYD, and HAEAEAKHLVYESDSNKDGKLSKEEILNKYDLFVGS. Residues Asp-81, Asp-83, Asp-85, Glu-92, Asp-117, Asn-119, Asp-121, Met-123, and Glu-128 each contribute to the Ca(2+) site. N-linked (GlcNAc...) asparagine glycosylation occurs at Asn-131. Ca(2+) contacts are provided by Asp-164, Asn-166, Asp-168, Glu-175, Asp-201, Asn-203, Asp-205, Glu-212, Asp-242, Asn-244, Asp-246, Lys-248, Glu-253, Asp-278, Asn-280, Asp-282, Lys-284, and Glu-289. The short motif at 312–315 is the Prevents secretion from ER element; sequence HDEF.

Belongs to the CREC family. In terms of assembly, interacts with ggcx.

The protein localises to the endoplasmic reticulum membrane. It localises to the golgi apparatus. It is found in the secreted. Its subcellular location is the melanosome. The protein resides in the sarcoplasmic reticulum lumen. Its function is as follows. Involved in regulation of vitamin K-dependent carboxylation of multiple N-terminal glutamate residues. Seems to inhibit gamma-carboxylase ggcx. Binds 7 calcium ions with a low affinity. This Salmo salar (Atlantic salmon) protein is Calumenin-A (calua).